A 211-amino-acid chain; its full sequence is ATP phosphoribosyltransferase (211 aa).

Belongs to the ATP phosphoribosyltransferase family. Short subfamily. In terms of assembly, heteromultimer composed of HisG and HisZ subunits.

Its subcellular location is the cytoplasm. The enzyme catalyses 1-(5-phospho-beta-D-ribosyl)-ATP + diphosphate = 5-phospho-alpha-D-ribose 1-diphosphate + ATP. The protein operates within amino-acid biosynthesis; L-histidine biosynthesis; L-histidine from 5-phospho-alpha-D-ribose 1-diphosphate: step 1/9. Functionally, catalyzes the condensation of ATP and 5-phosphoribose 1-diphosphate to form N'-(5'-phosphoribosyl)-ATP (PR-ATP). Has a crucial role in the pathway because the rate of histidine biosynthesis seems to be controlled primarily by regulation of HisG enzymatic activity. The chain is ATP phosphoribosyltransferase from Pseudomonas fluorescens (strain ATCC BAA-477 / NRRL B-23932 / Pf-5).